We begin with the raw amino-acid sequence, 283 residues long: Probable endonuclease 4 (283 aa).

His66, His106, Glu141, Asp174, His177, His211, Asp224, His226, and Glu256 together coordinate Zn(2+).

This sequence belongs to the AP endonuclease 2 family. Zn(2+) serves as cofactor.

The enzyme catalyses Endonucleolytic cleavage to 5'-phosphooligonucleotide end-products.. Functionally, endonuclease IV plays a role in DNA repair. It cleaves phosphodiester bonds at apurinic or apyrimidinic (AP) sites, generating a 3'-hydroxyl group and a 5'-terminal sugar phosphate. The chain is Probable endonuclease 4 from Carboxydothermus hydrogenoformans (strain ATCC BAA-161 / DSM 6008 / Z-2901).